The primary structure comprises 614 residues: MSTEVYDGAIGIDLGTTYSCVATYEGSNVEIIANEQGSFTTPSFVSFTADERLIGEAAKNQAAMNPANTVFDVKRLIGRRFDDPTVKKDMESWPFKVVDEDGNPKVEVEYLGTTHKFSPQEISAMVLVKMKEIAEAKIGKKVEKAVITVPAYFNDNQRQSTKDAGAISGLNVLRIINEPTAAAIAYGLGSGKSEKERNVLIYDLGGGTFDVSLLNIQGGVFTVKATAGDTHLGGQDFDTNLLDHCKKDFQRKTKKDLSGDARALRRLRTACERAKRTLSNGTQTTLEIDSLFDGEDFSLQITRAKFEELNQTAFKGTLDPVTQVLKDAGVDKAAVDEIVLVGGSTRIPKIQKLLSDYFGGKKLEKSINPDEAVAYGAAVQAGILSGKATSAETADLLLLDVVPLSLGVAMEGNIFAPVVPRGTTVPTLKKRSFTTVADQQQTVQFPVYQGERTNCSENVSLGEFTLAPIPPMRAGEPVLEVVFEVDVNGILKVTATEKTSGRSANITIANSVGKLSTSEIENMISEAEKYKTNDEEFTKKHEAKQQLESYIARVEDIISDPTLALKLKRGQKEKIENTMSEAMAQLELGESTADDLKKKELALKRAVTKAMSSR.

The nucleotide binding domain (NBD) stretch occupies residues 1 to 392 (MSTEVYDGAI…ILSGKATSAE (392 aa)). ATP is bound by residues 16 to 18 (TTY), K74, 206 to 208 (GGT), 272 to 279 (ERAKRTLS), and G343. An inter-domain linker region spans residues 393 to 403 (TADLLLLDVVP). Residues 404–614 (LSLGVAMEGN…RAVTKAMSSR (211 aa)) are substrate binding domain (SBD). The interval 517-613 (TSEIENMISE…KRAVTKAMSS (97 aa)) is lid domain (SBDalpha). The Nuclear export signal motif lies at 575–583 (IENTMSEAM).

Belongs to the heat shock protein 70 family. As to quaternary structure, interacts with HAT1 in starvation conditions.

It is found in the nucleus. Its subcellular location is the cytoplasm. It carries out the reaction ATP + H2O = ADP + phosphate + H(+). In terms of biological role, chaperone that interacts with the histone acetyltransferase HAT1 and mediates its translocation from the nucleus to the cytoplasm during germination and starvation conditions. Within the cytoplasm, HAT1 regulates autophagy via acetylation of the autophagy-related proteins ATG3 and ATG9. The protein is Heat shock protein SSB1 of Pyricularia oryzae (strain 70-15 / ATCC MYA-4617 / FGSC 8958) (Rice blast fungus).